Reading from the N-terminus, the 459-residue chain is Bifunctional protein GlmU (459 aa).

A pyrophosphorylase region spans residues 1 to 229; it reads MSNFAIILAA…FDESLGVNDR (229 aa). UDP-N-acetyl-alpha-D-glucosamine-binding positions include 8-11, lysine 22, glutamine 72, 77-78, 101-102, glycine 139, glutamate 154, asparagine 169, and asparagine 227; these read LAAG, GT, and GD. Aspartate 102 lines the Ca(2+) pocket. A Mg(2+)-binding site is contributed by aspartate 102. Position 227 (asparagine 227) interacts with Ca(2+). Asparagine 227 is a Mg(2+) binding site. Residues 230 to 250 form a linker region; the sequence is VALATAESVMRRRINHKHMVN. Residues 251 to 459 are N-acetyltransferase; that stretch reads GVSFVNPEAT…TRLPHHPKNQ (209 aa). Residues arginine 332 and lysine 350 each contribute to the UDP-N-acetyl-alpha-D-glucosamine site. Histidine 362 (proton acceptor) is an active-site residue. Residues tyrosine 365 and asparagine 376 each contribute to the UDP-N-acetyl-alpha-D-glucosamine site. Residues alanine 379, 385–386, serine 404, alanine 422, and arginine 439 contribute to the acetyl-CoA site; that span reads NY.

It in the N-terminal section; belongs to the N-acetylglucosamine-1-phosphate uridyltransferase family. In the C-terminal section; belongs to the transferase hexapeptide repeat family. As to quaternary structure, homotrimer. Mg(2+) is required as a cofactor. It depends on Ca(2+) as a cofactor.

The protein resides in the cytoplasm. The catalysed reaction is alpha-D-glucosamine 1-phosphate + acetyl-CoA = N-acetyl-alpha-D-glucosamine 1-phosphate + CoA + H(+). The enzyme catalyses N-acetyl-alpha-D-glucosamine 1-phosphate + UTP + H(+) = UDP-N-acetyl-alpha-D-glucosamine + diphosphate. The protein operates within nucleotide-sugar biosynthesis; UDP-N-acetyl-alpha-D-glucosamine biosynthesis; N-acetyl-alpha-D-glucosamine 1-phosphate from alpha-D-glucosamine 6-phosphate (route II): step 2/2. It functions in the pathway nucleotide-sugar biosynthesis; UDP-N-acetyl-alpha-D-glucosamine biosynthesis; UDP-N-acetyl-alpha-D-glucosamine from N-acetyl-alpha-D-glucosamine 1-phosphate: step 1/1. It participates in bacterial outer membrane biogenesis; LPS lipid A biosynthesis. Its function is as follows. Catalyzes the last two sequential reactions in the de novo biosynthetic pathway for UDP-N-acetylglucosamine (UDP-GlcNAc). The C-terminal domain catalyzes the transfer of acetyl group from acetyl coenzyme A to glucosamine-1-phosphate (GlcN-1-P) to produce N-acetylglucosamine-1-phosphate (GlcNAc-1-P), which is converted into UDP-GlcNAc by the transfer of uridine 5-monophosphate (from uridine 5-triphosphate), a reaction catalyzed by the N-terminal domain. The chain is Bifunctional protein GlmU from Streptococcus pneumoniae serotype 4 (strain ATCC BAA-334 / TIGR4).